Reading from the N-terminus, the 394-residue chain is Acetate kinase (394 aa).

Position 10 (asparagine 10) interacts with Mg(2+). An ATP-binding site is contributed by lysine 17. Arginine 87 serves as a coordination point for substrate. The Proton donor/acceptor role is filled by aspartate 144. ATP-binding positions include 204–208 (HLGNG), 279–281 (DMR), and 327–331 (GIGEN). Glutamate 381 serves as a coordination point for Mg(2+).

This sequence belongs to the acetokinase family. Homodimer. It depends on Mg(2+) as a cofactor. The cofactor is Mn(2+).

It localises to the cytoplasm. The enzyme catalyses acetate + ATP = acetyl phosphate + ADP. Its pathway is metabolic intermediate biosynthesis; acetyl-CoA biosynthesis; acetyl-CoA from acetate: step 1/2. Its function is as follows. Catalyzes the formation of acetyl phosphate from acetate and ATP. Can also catalyze the reverse reaction. This is Acetate kinase from Ectopseudomonas mendocina (strain ymp) (Pseudomonas mendocina).